We begin with the raw amino-acid sequence, 239 residues long: tRNA (guanine-N(1)-)-methyltransferase (239 aa).

S-adenosyl-L-methionine contacts are provided by residues glycine 108 and 127–132 (LGDFVL).

It belongs to the RNA methyltransferase TrmD family. As to quaternary structure, homodimer.

It is found in the cytoplasm. It carries out the reaction guanosine(37) in tRNA + S-adenosyl-L-methionine = N(1)-methylguanosine(37) in tRNA + S-adenosyl-L-homocysteine + H(+). In terms of biological role, specifically methylates guanosine-37 in various tRNAs. In Streptococcus thermophilus (strain ATCC BAA-250 / LMG 18311), this protein is tRNA (guanine-N(1)-)-methyltransferase.